The following is a 461-amino-acid chain: Serine--tRNA ligase (461 aa).

Residues 112 to 134 (EVPFGRDENDNREHHTFGEKPRF) are disordered. A compositionally biased stretch (basic and acidic residues) spans 114–134 (PFGRDENDNREHHTFGEKPRF). 252–254 (TAE) serves as a coordination point for L-serine. 283-285 (RAE) provides a ligand contact to ATP. E306 provides a ligand contact to L-serine. Residue 370–373 (EISS) participates in ATP binding. Residue S406 coordinates L-serine.

This sequence belongs to the class-II aminoacyl-tRNA synthetase family. Type-1 seryl-tRNA synthetase subfamily. As to quaternary structure, homodimer. The tRNA molecule binds across the dimer.

It is found in the cytoplasm. It catalyses the reaction tRNA(Ser) + L-serine + ATP = L-seryl-tRNA(Ser) + AMP + diphosphate + H(+). The catalysed reaction is tRNA(Sec) + L-serine + ATP = L-seryl-tRNA(Sec) + AMP + diphosphate + H(+). The protein operates within aminoacyl-tRNA biosynthesis; selenocysteinyl-tRNA(Sec) biosynthesis; L-seryl-tRNA(Sec) from L-serine and tRNA(Sec): step 1/1. In terms of biological role, catalyzes the attachment of serine to tRNA(Ser). Is also able to aminoacylate tRNA(Sec) with serine, to form the misacylated tRNA L-seryl-tRNA(Sec), which will be further converted into selenocysteinyl-tRNA(Sec). The protein is Serine--tRNA ligase of Methylocella silvestris (strain DSM 15510 / CIP 108128 / LMG 27833 / NCIMB 13906 / BL2).